Consider the following 164-residue polypeptide: Crossover junction endodeoxyribonuclease RuvC (164 aa).

Active-site residues include aspartate 7, glutamate 67, and aspartate 139. 3 residues coordinate Mg(2+): aspartate 7, glutamate 67, and aspartate 139.

Belongs to the RuvC family. In terms of assembly, homodimer which binds Holliday junction (HJ) DNA. The HJ becomes 2-fold symmetrical on binding to RuvC with unstacked arms; it has a different conformation from HJ DNA in complex with RuvA. In the full resolvosome a probable DNA-RuvA(4)-RuvB(12)-RuvC(2) complex forms which resolves the HJ. Mg(2+) is required as a cofactor.

The protein resides in the cytoplasm. The catalysed reaction is Endonucleolytic cleavage at a junction such as a reciprocal single-stranded crossover between two homologous DNA duplexes (Holliday junction).. Functionally, the RuvA-RuvB-RuvC complex processes Holliday junction (HJ) DNA during genetic recombination and DNA repair. Endonuclease that resolves HJ intermediates. Cleaves cruciform DNA by making single-stranded nicks across the HJ at symmetrical positions within the homologous arms, yielding a 5'-phosphate and a 3'-hydroxyl group; requires a central core of homology in the junction. The consensus cleavage sequence is 5'-(A/T)TT(C/G)-3'. Cleavage occurs on the 3'-side of the TT dinucleotide at the point of strand exchange. HJ branch migration catalyzed by RuvA-RuvB allows RuvC to scan DNA until it finds its consensus sequence, where it cleaves and resolves the cruciform DNA. This Geobacter sp. (strain M21) protein is Crossover junction endodeoxyribonuclease RuvC.